A 95-amino-acid chain; its full sequence is Large ribosomal subunit protein bL21 (95 aa).

The protein belongs to the bacterial ribosomal protein bL21 family. Part of the 50S ribosomal subunit. Contacts protein L20.

In terms of biological role, this protein binds to 23S rRNA in the presence of protein L20. The chain is Large ribosomal subunit protein bL21 from Chlorobaculum tepidum (strain ATCC 49652 / DSM 12025 / NBRC 103806 / TLS) (Chlorobium tepidum).